Here is a 921-residue protein sequence, read N- to C-terminus: Isoleucine--tRNA ligase (921 aa).

The 'HIGH' region signature appears at 57–67 (PYANGDIHMGH). L-isoleucyl-5'-AMP is bound at residue glutamate 553. The 'KMSKS' region signature appears at 594 to 598 (KMSKS). Lysine 597 serves as a coordination point for ATP.

Belongs to the class-I aminoacyl-tRNA synthetase family. IleS type 1 subfamily. As to quaternary structure, monomer.

Its subcellular location is the cytoplasm. It carries out the reaction tRNA(Ile) + L-isoleucine + ATP = L-isoleucyl-tRNA(Ile) + AMP + diphosphate. Its function is as follows. Catalyzes the attachment of isoleucine to tRNA(Ile). As IleRS can inadvertently accommodate and process structurally similar amino acids such as valine, to avoid such errors it has two additional distinct tRNA(Ile)-dependent editing activities. One activity is designated as 'pretransfer' editing and involves the hydrolysis of activated Val-AMP. The other activity is designated 'posttransfer' editing and involves deacylation of mischarged Val-tRNA(Ile). This chain is Isoleucine--tRNA ligase, found in Bacillus subtilis (strain 168).